Reading from the N-terminus, the 191-residue chain is Xanthine phosphoribosyltransferase (191 aa).

Xanthine-binding residues include Leu-20 and Asn-27. Ala-128–Ala-132 provides a ligand contact to 5-phospho-alpha-D-ribose 1-diphosphate. Xanthine is bound at residue Lys-156.

It belongs to the purine/pyrimidine phosphoribosyltransferase family. Xpt subfamily. In terms of assembly, homodimer.

The protein localises to the cytoplasm. It catalyses the reaction XMP + diphosphate = xanthine + 5-phospho-alpha-D-ribose 1-diphosphate. Its pathway is purine metabolism; XMP biosynthesis via salvage pathway; XMP from xanthine: step 1/1. Converts the preformed base xanthine, a product of nucleic acid breakdown, to xanthosine 5'-monophosphate (XMP), so it can be reused for RNA or DNA synthesis. This chain is Xanthine phosphoribosyltransferase, found in Acinetobacter baumannii (strain AB307-0294).